A 147-amino-acid polypeptide reads, in one-letter code: Riboflavin kinase (147 aa).

CDP is bound at residue G15–R20. 2 residues coordinate Mg(2+): T44 and N46. 2 residues coordinate FMN: T97 and E104. T109–R112 contributes to the CDP binding site.

Belongs to the archaeal riboflavin kinase family. Mg(2+) is required as a cofactor.

It carries out the reaction riboflavin + CTP = CDP + FMN + H(+). It participates in cofactor biosynthesis; FMN biosynthesis; FMN from riboflavin (CTP route): step 1/1. Catalyzes the CTP-dependent phosphorylation of riboflavin (vitamin B2) to form flavin mononucleotide (FMN). The chain is Riboflavin kinase from Methanopyrus kandleri (strain AV19 / DSM 6324 / JCM 9639 / NBRC 100938).